Here is a 605-residue protein sequence, read N- to C-terminus: NADH-ubiquinone oxidoreductase chain 5 (605 aa).

15 helical membrane passes run 8–28, 34–54, 87–107, 117–137, 140–160, 171–191, 241–261, 273–293, 301–321, 324–344, 366–386, 409–429, 457–477, 482–502, and 584–604; these read TLLS…YPYT, IYVK…TMIF, MILM…SMWY, FFKY…ANNL, LFIG…WWYG, AILY…WFLF, TPVS…FLLI, IQTM…ICAL, IVAF…GINQ, LAFL…LCSG, LPFT…MPFL, LFIT…IIYF, LLVG…PTTI, MPTY…IVAL, and IKLY…MLNF.

The protein belongs to the complex I subunit 5 family. Core subunit of respiratory chain NADH dehydrogenase (Complex I) which is composed of 45 different subunits.

It is found in the mitochondrion inner membrane. It carries out the reaction a ubiquinone + NADH + 5 H(+)(in) = a ubiquinol + NAD(+) + 4 H(+)(out). Its function is as follows. Core subunit of the mitochondrial membrane respiratory chain NADH dehydrogenase (Complex I) which catalyzes electron transfer from NADH through the respiratory chain, using ubiquinone as an electron acceptor. Essential for the catalytic activity and assembly of complex I. The chain is NADH-ubiquinone oxidoreductase chain 5 (MT-ND5) from Rousettus amplexicaudatus (Common rousette).